The chain runs to 124 residues: Small ribosomal subunit protein uS12 (124 aa).

The residue at position 89 (Asp-89) is a 3-methylthioaspartic acid.

Belongs to the universal ribosomal protein uS12 family. Part of the 30S ribosomal subunit. Contacts proteins S8 and S17. May interact with IF1 in the 30S initiation complex.

Functionally, with S4 and S5 plays an important role in translational accuracy. Interacts with and stabilizes bases of the 16S rRNA that are involved in tRNA selection in the A site and with the mRNA backbone. Located at the interface of the 30S and 50S subunits, it traverses the body of the 30S subunit contacting proteins on the other side and probably holding the rRNA structure together. The combined cluster of proteins S8, S12 and S17 appears to hold together the shoulder and platform of the 30S subunit. The protein is Small ribosomal subunit protein uS12 of Erwinia tasmaniensis (strain DSM 17950 / CFBP 7177 / CIP 109463 / NCPPB 4357 / Et1/99).